The primary structure comprises 598 residues: Phenylalanine--tRNA ligase beta subunit, cytoplasmic (598 aa).

The B5 domain occupies 303–383 (LAVYDMEVPL…IAYGFNNIPT (81 aa)). Positions 361, 367, 370, and 371 each coordinate Mg(2+).

The protein belongs to the phenylalanyl-tRNA synthetase beta subunit family. Type 2 subfamily. As to quaternary structure, tetramer of two alpha and two beta subunits. Mg(2+) is required as a cofactor.

It is found in the cytoplasm. The protein resides in the cytosol. It catalyses the reaction tRNA(Phe) + L-phenylalanine + ATP = L-phenylalanyl-tRNA(Phe) + AMP + diphosphate + H(+). This is Phenylalanine--tRNA ligase beta subunit, cytoplasmic from Arabidopsis thaliana (Mouse-ear cress).